Consider the following 132-residue polypeptide: Agouti-signaling protein (132 aa).

An N-terminal signal peptide occupies residues 1–22; sequence MDVTRLLLATLLVFLCFFTAYS. The N-linked (GlcNAc...) asparagine glycan is linked to N39. The segment at 61-87 is disordered; that stretch reads QISRKEAEKKRSSKKEASMKKVARPRT. A compositionally biased stretch (basic and acidic residues) spans 63-79; sequence SRKEAEKKRSSKKEASM. Cystine bridges form between C93-C108, C100-C114, C107-C125, C111-C132, and C116-C123. An Agouti domain is found at 93 to 132; sequence CVATRDSCKPPAPACCDPCASCQCRFFRSACSCRVLSLNC.

Its subcellular location is the secreted. Its function is as follows. Involved in the regulation of melanogenesis. The binding of ASP to MC1R precludes alpha-MSH initiated signaling and thus blocks production of cAMP, leading to a down-regulation of eumelanogenesis (brown/black pigment) and thus increasing synthesis of pheomelanin (yellow/red pigment). The polypeptide is Agouti-signaling protein (ASIP) (Macaca maura (Moor macaque)).